The primary structure comprises 198 residues: Remorin (198 aa).

A compositionally biased stretch (basic and acidic residues) spans 1–11; that stretch reads MAELEAKKVEI. The tract at residues 1 to 24 is disordered; the sequence is MAELEAKKVEIVDPAPPAPGPVEA. The stretch at 97-184 forms a coiled coil; the sequence is EESEKSKAEN…LKAEELAAKY (88 aa).

This sequence belongs to the remorin family. The N-terminus is blocked. Post-translationally, phosphorylated.

The protein localises to the cell membrane. Its function is as follows. Binds to both simple and complex galacturonides. May be involved in cell-to-cell signaling and molecular transport. This is Remorin from Solanum tuberosum (Potato).